The sequence spans 492 residues: uncharacterized protein (492 aa).

Belongs to the FGGY kinase family.

This is an uncharacterized protein from Archaeoglobus fulgidus (strain ATCC 49558 / DSM 4304 / JCM 9628 / NBRC 100126 / VC-16).